The primary structure comprises 96 residues: Small ribosomal subunit protein uS19 (96 aa).

It belongs to the universal ribosomal protein uS19 family.

Protein S19 forms a complex with S13 that binds strongly to the 16S ribosomal RNA. The polypeptide is Small ribosomal subunit protein uS19 (Gemmatimonas aurantiaca (strain DSM 14586 / JCM 11422 / NBRC 100505 / T-27)).